A 217-amino-acid chain; its full sequence is MAGGYRAEDDYDYLFKLVLIGDSGVGKSNLLSRFSRNEFNLESKSTIGVEFATRSIRVDDKIVKAQIWDTAGQERYRAITSAYYRGAVGALVVYDITRHVTFENVERWLKELRDHTDQNIVIMLVGNKADLRHLRAVSTEDAKAFAERENTFFMETSALESLNVENAFTEVLTEIYKVVCRKALEVGDDPAALPKGQTINVGKDDVSAVKKVGCCSS.

Residue 21 to 28 coordinates GTP; it reads GDSGVGKS. The Effector region motif lies at 43–51; the sequence is SKSTIGVEF. GTP-binding positions include 69-73 and 127-130; these read DTAGQ and NKAD. 2 S-geranylgeranyl cysteine lipidation sites follow: C214 and C215.

This sequence belongs to the small GTPase superfamily. Rab family.

It localises to the cell membrane. This Nicotiana tabacum (Common tobacco) protein is Ras-related protein Rab11B (RAB11B).